A 208-amino-acid polypeptide reads, in one-letter code: Methionine-R-sulfoxide reductase B1 (208 aa).

The segment covering 27–36 (QDSDNPDKRY) has biased composition (basic and acidic residues). Residues 27-48 (QDSDNPDKRYSGPAATMDNKSE) are disordered. The 135-residue stretch at 54 to 188 (KEELRKRLTP…NSASIEFVNA (135 aa)) folds into the MsrB domain. Zn(2+) is bound by residues cysteine 93, cysteine 96, cysteine 154, and cysteine 157. Cysteine 111 and cysteine 177 are oxidised to a cystine. The Nucleophile role is filled by cysteine 177. A disordered region spans residues 189–208 (DPATSSPPVATPTAAPIAQQ).

It belongs to the MsrB Met sulfoxide reductase family. Zn(2+) serves as cofactor. In terms of tissue distribution, present in the embryonic nervous system (brain and cord) in neuronal cell bodies, along axons. Also present in embryonic muscles in motor axons. Localizes to growing bristle tips where it is distributed in small puntae. Present at and at sites of actin localization.

The protein localises to the cytoplasm. It is found in the nucleus. The protein resides in the cytoskeleton. It catalyses the reaction L-methionyl-[protein] + [thioredoxin]-disulfide + H2O = L-methionyl-(R)-S-oxide-[protein] + [thioredoxin]-dithiol. In terms of biological role, methionine-sulfoxide reductase that specifically reduces methionine (R)-sulfoxide back to methionine. While in many cases methionine oxidation is the result of random oxidation following oxidative stress, methionine oxidation is also a post-translational modification that takes place on specific residues. Acts as a regulator of actin assembly by reducing methionine (R)-sulfoxide mediated by Mical on actin thereby promoting filament repolymerization. This Drosophila melanogaster (Fruit fly) protein is Methionine-R-sulfoxide reductase B1 (SelR).